Here is a 447-residue protein sequence, read N- to C-terminus: MFKLGRNRALASAFAATSRAPLASRLPSVSQQQRRALSIHEYLSADLLRQYGIGVPKGDVARTGAEAEAIAKQIGGEDMVIKAQVLAGGRGKGTFDNGLKGGVRVIYSPTEAKMFAEQMIGHKLITKQTGAQGRLCSAVYICERKFARREFYLAVLMDRASQGPVIVSSSQGGMDIEGVAKENPEAIHTTYIDINVGVTDEMARDIATKLGFSEQCVEEAKDTIQKLYKIFCEKDATQIEINPLSETSDHKVMAMDAKFGFDDNADFRQPDIFKLRDTTQEDPDEVRAAQAGLNFIKLDGDIGCLVNGAGLAMATMDIIKLNGGQPANFLDVGGGATPAAIREAFELITSDPKVTAIFVNIFGGIVRCDAIAHGLINTVKSLDLKIPIIARLQGTNMEAARQLINDSGMKIFSIDDLQSAAEKSVQLSKVVKMARDIDVGVEFTLGI.

The N-terminal 34 residues, 1 to 34 (MFKLGRNRALASAFAATSRAPLASRLPSVSQQQR), are a transit peptide targeting the mitochondrion. An ATP-grasp domain is found at 45-287 (ADLLRQYGIG…TTQEDPDEVR (243 aa)). ATP contacts are provided by residues K82, 89–91 (GRG), and E150. Positions 242 and 256 each coordinate Mg(2+). Substrate-binding positions include N307 and 364–366 (GIV).

This sequence belongs to the succinate/malate CoA ligase beta subunit family. Heterodimer of an alpha and a beta subunit. Mg(2+) serves as cofactor.

The protein resides in the mitochondrion. The enzyme catalyses succinate + ATP + CoA = succinyl-CoA + ADP + phosphate. Its pathway is carbohydrate metabolism; tricarboxylic acid cycle; succinate from succinyl-CoA (ligase route): step 1/1. In terms of biological role, succinyl-CoA synthetase functions in the citric acid cycle (TCA), coupling the hydrolysis of succinyl-CoA to the synthesis of ATP and thus represents the only step of substrate-level phosphorylation in the TCA. The beta subunit provides nucleotide specificity of the enzyme and binds the substrate succinate, while the binding sites for coenzyme A and phosphate are found in the alpha subunit. The chain is Succinate--CoA ligase [ADP-forming] subunit beta, mitochondrial from Neurospora crassa (strain ATCC 24698 / 74-OR23-1A / CBS 708.71 / DSM 1257 / FGSC 987).